The following is a 721-amino-acid chain: Polyribonucleotide nucleotidyltransferase (721 aa).

Residues Asp-485 and Asp-491 each coordinate Mg(2+). The KH domain occupies 552 to 611 (PKIYIVKIHPDKIREIIGPGGKVIRELQAMSNTRIEVDDSGTVKIAASTEEEARIAIKAV). The region spanning 621 to 689 (GEIYEGEVVR…PEGKIRLSRK (69 aa)) is the S1 motif domain. The tract at residues 687 to 721 (SRKALLPAPEKGEEDEKSAPRSRRPGGNSDRRNNR) is disordered.

It belongs to the polyribonucleotide nucleotidyltransferase family. Mg(2+) serves as cofactor.

Its subcellular location is the cytoplasm. The catalysed reaction is RNA(n+1) + phosphate = RNA(n) + a ribonucleoside 5'-diphosphate. Involved in mRNA degradation. Catalyzes the phosphorolysis of single-stranded polyribonucleotides processively in the 3'- to 5'-direction. This chain is Polyribonucleotide nucleotidyltransferase, found in Desulfosudis oleivorans (strain DSM 6200 / JCM 39069 / Hxd3) (Desulfococcus oleovorans).